A 314-amino-acid polypeptide reads, in one-letter code: MAFVTRQFMRSVSSSSTASASAKKIIVKHVTVIGGGLMGAGIAQVAAATGHTVVLVDQTEDILAKSKKGIEESLRKVAKKKFAENLKAGDEFVEKTLSTIATSTDAASVVHSTDLVVEAIVENLKVKNELFKRLDKFAAEHTIFASNTSSLQITSIANATTRQDRFAGLHFFNPVPVMKLVEVIKTPMTSQKTFESLVDFSKALGKHPVSCKDTPGFIVNRLLVPYLMEAIRLYERGDASKEDIDTAMKLGAGYPMGPFELLDYVGLDTTKFIVDGWHEMDAENPLHQPSPSLNKLVAENKFGKKTGEGFYKYK.

Residues 1–12 constitute a mitochondrion transit peptide; the sequence is MAFVTRQFMRSV. NAD(+) is bound by residues 34–39 and Asp-57; that span reads GGGLMG. CoA-binding residues include Ser-73 and Lys-80. Lys-80 carries the post-translational modification N6-succinyllysine. N6-acetyllysine; alternate occurs at positions 81 and 87. 2 positions are modified to N6-succinyllysine; alternate: Lys-81 and Lys-87. Residue Glu-122 coordinates NAD(+). The residue at position 125 (Lys-125) is an N6-acetyllysine. Lys-127 serves as a coordination point for NAD(+). Lys-127 is subject to N6-(2-hydroxyisobutyryl)lysine. An N6-acetyllysine; alternate modification is found at Lys-136. Residue Lys-136 is modified to N6-succinyllysine; alternate. Residues Ser-149 and Asn-173 each coordinate NAD(+). Residue Ser-149 participates in CoA binding. Lys-179 carries the post-translational modification N6-acetyllysine. Residues Lys-185, Lys-192, and Lys-202 each carry the N6-acetyllysine; alternate modification. Lys-185, Lys-192, and Lys-202 each carry N6-succinyllysine; alternate. At Lys-206 the chain carries N6-succinyllysine. 2 positions are modified to N6-acetyllysine; alternate: Lys-212 and Lys-241. Residues Lys-212 and Lys-241 each carry the N6-succinyllysine; alternate modification. Lys-305 serves as a coordination point for NAD(+). Lys-312 carries the post-translational modification N6-acetyllysine; alternate. Position 312 is an N6-succinyllysine; alternate (Lys-312).

The protein belongs to the 3-hydroxyacyl-CoA dehydrogenase family. Homodimer. Interacts with GLUD1; this interaction inhibits the activation of glutamate dehydrogenase 1 (GLUD1). In terms of processing, succinylation at Lys-81, adjacent to a coenzyme A binding site. Desuccinylated by SIRT5. As to expression, expressed in liver, kidney, pancreas, heart and skeletal muscle.

Its subcellular location is the mitochondrion matrix. It catalyses the reaction a (3S)-3-hydroxyacyl-CoA + NAD(+) = a 3-oxoacyl-CoA + NADH + H(+). The enzyme catalyses (3S)-3-hydroxybutanoyl-CoA + NAD(+) = acetoacetyl-CoA + NADH + H(+). It carries out the reaction (3S)-hydroxydecanoyl-CoA + NAD(+) = 3-oxodecanoyl-CoA + NADH + H(+). The catalysed reaction is (3S)-hydroxyhexadecanoyl-CoA + NAD(+) = 3-oxohexadecanoyl-CoA + NADH + H(+). It participates in lipid metabolism; fatty acid beta-oxidation. Mitochondrial fatty acid beta-oxidation enzyme that catalyzes the third step of the beta-oxidation cycle for medium and short-chain 3-hydroxy fatty acyl-CoAs (C4 to C10). Plays a role in the control of insulin secretion by inhibiting the activation of glutamate dehydrogenase 1 (GLUD1), an enzyme that has an important role in regulating amino acid-induced insulin secretion. Plays a role in the maintenance of normal spermatogenesis through the reduction of fatty acid accumulation in the testes. The protein is Hydroxyacyl-coenzyme A dehydrogenase, mitochondrial (HADH) of Homo sapiens (Human).